A 333-amino-acid chain; its full sequence is Ornithine carbamoyltransferase (333 aa).

Residues 56-59, arginine 107, and 134-137 contribute to the carbamoyl phosphate site; these read STRT and HPTQ. L-ornithine-binding positions include asparagine 167, aspartate 231, and 235-236; that span reads SM. Residues 273 to 274 and arginine 318 contribute to the carbamoyl phosphate site; that span reads CL.

Belongs to the aspartate/ornithine carbamoyltransferase superfamily. OTCase family.

It localises to the cytoplasm. It catalyses the reaction carbamoyl phosphate + L-ornithine = L-citrulline + phosphate + H(+). It functions in the pathway amino-acid degradation; L-arginine degradation via ADI pathway; carbamoyl phosphate from L-arginine: step 2/2. In terms of biological role, reversibly catalyzes the transfer of the carbamoyl group from carbamoyl phosphate (CP) to the N(epsilon) atom of ornithine (ORN) to produce L-citrulline. The protein is Ornithine carbamoyltransferase of Clostridium botulinum (strain 657 / Type Ba4).